Consider the following 306-residue polypeptide: Ciliary microtubule inner protein 2B (306 aa).

Residues 61-92 (QSNPFPPPRDHSFDGGSQELGGRRQHPGDPNL) form a disordered region.

It belongs to the CIMIP2 family. In terms of tissue distribution, expressed in airway epithelial cells.

It is found in the cytoplasm. It localises to the cytoskeleton. The protein localises to the cilium axoneme. Functionally, microtubule inner protein (MIP) part of the dynein-decorated doublet microtubules (DMTs) in cilia axoneme, which is required for motile cilia beating. In Xenopus tropicalis (Western clawed frog), this protein is Ciliary microtubule inner protein 2B (cimip2b).